Consider the following 215-residue polypeptide: Putative glycosyltransferase ALG1L2 (215 aa).

The tract at residues 40-66 (PFRARSEPEDPDTERSAFTERDSGSGL) is disordered. The segment covering 43–62 (ARSEPEDPDTERSAFTERDS) has biased composition (basic and acidic residues).

The protein belongs to the glycosyltransferase group 1 family.

Its function is as follows. Putative glycosyltransferase. This chain is Putative glycosyltransferase ALG1L2 (ALG1L2), found in Homo sapiens (Human).